A 432-amino-acid chain; its full sequence is D-amino acid dehydrogenase (432 aa).

FAD is bound at residue Val3–Trp17.

Belongs to the DadA oxidoreductase family. FAD serves as cofactor.

The enzyme catalyses a D-alpha-amino acid + A + H2O = a 2-oxocarboxylate + AH2 + NH4(+). It functions in the pathway amino-acid degradation; D-alanine degradation; NH(3) and pyruvate from D-alanine: step 1/1. Functionally, oxidative deamination of D-amino acids. This Escherichia coli O127:H6 (strain E2348/69 / EPEC) protein is D-amino acid dehydrogenase.